A 296-amino-acid chain; its full sequence is UDP-N-acetylenolpyruvoylglucosamine reductase (296 aa).

The FAD-binding PCMH-type domain occupies 26-191 (RIGGPANYFK…LSATFRLSKS (166 aa)). Arg170 is a catalytic residue. Residue Cys218 is the Proton donor of the active site. The active site involves Glu287.

Belongs to the MurB family. It depends on FAD as a cofactor.

It localises to the cytoplasm. It catalyses the reaction UDP-N-acetyl-alpha-D-muramate + NADP(+) = UDP-N-acetyl-3-O-(1-carboxyvinyl)-alpha-D-glucosamine + NADPH + H(+). It participates in cell wall biogenesis; peptidoglycan biosynthesis. In terms of biological role, cell wall formation. The chain is UDP-N-acetylenolpyruvoylglucosamine reductase from Chlamydia felis (strain Fe/C-56) (Chlamydophila felis).